A 530-amino-acid chain; its full sequence is Carbohydrate sulfotransferase 2 (530 aa).

Over Met-1–Lys-54 the chain is Cytoplasmic. The chain crosses the membrane as a helical; Signal-anchor for type II membrane protein span at residues Ala-55–Asp-75. Residues Tyr-76–Leu-530 are Lumenal-facing. A disordered region spans residues Asp-89 to Arg-119. Trp-173–Phe-179 serves as a coordination point for 3'-phosphoadenylyl sulfate. The N-linked (GlcNAc...) asparagine glycan is linked to Asn-243. Residue Arg-332–Ser-340 coordinates 3'-phosphoadenylyl sulfate. N-linked (GlcNAc...) asparagine glycosylation is found at Asn-457 and Asn-475.

Belongs to the sulfotransferase 1 family. Gal/GlcNAc/GalNAc subfamily. In terms of assembly, homodimer; disulfide-linked. Homodimerization is not essential for enzyme activity. In terms of processing, glycosylation at Asn-475 is required for catalytic activity. In terms of tissue distribution, widely expressed. Highly expressed in bone marrow, peripheral blood leukocytes, spleen, brain, spinal cord, ovary and placenta. Expressed by high endothelial cells (HEVs) and leukocytes.

The protein localises to the golgi apparatus. Its subcellular location is the trans-Golgi network membrane. The enzyme catalyses 3-O-{N-acetyl-beta-D-glucosaminyl-(1-&gt;3)-beta-D-galactosyl-(1-&gt;3)-N-acetyl-alpha-D-galactosaminyl}-L-threonyl-[protein] + 3'-phosphoadenylyl sulfate = 3-O-{6-O-sulfo-N-acetyl-beta-D-glucosaminyl-(1-&gt;3)-beta-D-galactosyl-(1-&gt;3)-N-acetyl-alpha-D-galactosaminyl}-L-threonyl-[protein] + adenosine 3',5'-bisphosphate + H(+). It catalyses the reaction 3-O-{N-acetyl-beta-D-glucosaminyl-(1-&gt;3)-beta-D-galactosyl-(1-&gt;3)-N-acetyl-alpha-D-galactosaminyl}-L-seryl-[protein] + 3'-phosphoadenylyl sulfate = 3-O-{6-O-sulfo-N-acetyl-beta-D-glucosaminyl-(1-&gt;3)-beta-D-galactosyl-(1-&gt;3)-N-acetyl-alpha-D-galactosaminyl}-L-seryl-[protein] + adenosine 3',5'-bisphosphate + H(+). It carries out the reaction a 3-O-{beta-D-galactosyl-(1-&gt;3)-[N-acetyl-beta-D-glucosaminyl-(1-&gt;6)]-N-acetyl-alpha-D-galactosaminyl}-L-threonyl-[protein] + 3'-phosphoadenylyl sulfate = 3-O-{beta-D-galactosyl-(1-&gt;3)-[6-O-sulfo-N-acetyl-beta-D-glucosaminyl-(1-&gt;6)]-N-acetyl-alpha-D-galactosaminyl}-L-threonyl-[protein] + adenosine 3',5'-bisphosphate + H(+). The catalysed reaction is 3-O-{beta-D-galactosyl-(1-&gt;3)-[N-acetyl-beta-D-glucosaminyl-(1-&gt;6)]-N-acetyl-alpha-D-galactosaminyl}-L-seryl-[protein] + 3'-phosphoadenylyl sulfate = 3-O-{beta-D-galactosyl-(1-&gt;3)-[6-O-sulfo-N-acetyl-beta-D-glucosaminyl-(1-&gt;6)]-N-acetyl-alpha-D-galactosaminyl}-L-seryl-[protein] + adenosine 3',5'-bisphosphate + H(+). It functions in the pathway protein modification; carbohydrate sulfation. In terms of biological role, sulfotransferase that utilizes 3'-phospho-5'-adenylyl sulfate (PAPS) as sulfonate donor to catalyze the transfer of sulfate to position 6 of non-reducing N-acetylglucosamine (GlcNAc) residues within keratan-like structures on N-linked glycans and within mucin-associated glycans that can ultimately serve as SELL ligands. SELL ligands are present in high endothelial cells (HEVs) and play a central role in lymphocyte homing at sites of inflammation. Participates in biosynthesis of the SELL ligand sialyl 6-sulfo Lewis X and in lymphocyte homing to Peyer patches. Has no activity toward O-linked sugars. Its substrate specificity may be influenced by its subcellular location. Sulfates GlcNAc residues at terminal, non-reducing ends of oligosaccharide chains. This Homo sapiens (Human) protein is Carbohydrate sulfotransferase 2 (CHST2).